A 96-amino-acid polypeptide reads, in one-letter code: Auxin-responsive protein SAUR29 (96 aa).

The protein belongs to the ARG7 family.

Its subcellular location is the cell membrane. Functionally, functions as a positive effector of cell expansion through modulation of auxin transport. Involved in thermo-responsiveness of plant architecture. Enhances plasma membrane H(+)-ATPase. This Arabidopsis thaliana (Mouse-ear cress) protein is Auxin-responsive protein SAUR29.